The chain runs to 441 residues: UDP-N-acetylmuramoylalanine--D-glutamate ligase (441 aa).

Position 112 to 118 (112 to 118) interacts with ATP; the sequence is GTNGKTT.

Belongs to the MurCDEF family.

The protein resides in the cytoplasm. It catalyses the reaction UDP-N-acetyl-alpha-D-muramoyl-L-alanine + D-glutamate + ATP = UDP-N-acetyl-alpha-D-muramoyl-L-alanyl-D-glutamate + ADP + phosphate + H(+). The protein operates within cell wall biogenesis; peptidoglycan biosynthesis. Cell wall formation. Catalyzes the addition of glutamate to the nucleotide precursor UDP-N-acetylmuramoyl-L-alanine (UMA). This chain is UDP-N-acetylmuramoylalanine--D-glutamate ligase, found in Gloeobacter violaceus (strain ATCC 29082 / PCC 7421).